A 91-amino-acid chain; its full sequence is Glycophorin-B (91 aa).

An N-terminal signal peptide occupies residues 1 to 19 (MYGKIIFVLLLSEIVSISA). Residues 20–59 (LSTTEVAMHTSTSSSVTKSYISSQTNGETGQLVHRFTVPA) are Extracellular-facing. O-linked (GalNAc...) threonine glycosylation occurs at T36. A glycan (O-linked (GalNAc...) serine) is linked at S38. The chain crosses the membrane as a helical span at residues 60–81 (PVVIILIILCVMAGIIGTILLI). The Cytoplasmic portion of the chain corresponds to 82 to 91 (SYSIRRLIKA).

The protein belongs to the glycophorin-A family. Component of the ankyrin-1 complex in the erythrocyte, composed of ANK1, RHCE, RHAG, SLC4A1, EPB42, GYPA, GYPB and AQP1. Interacts (via the N-terminal) with RHAG; this interaction bridges the (RHAG)2(RHCE) heterotrimer with the SLC4A1 Band 3 I dimer complexed with GYPA. In terms of processing, the N-terminal extracellular domain is heavily glycosylated on serine and threonine residues.

It localises to the cell membrane. Functionally, component of the ankyrin-1 complex, a multiprotein complex involved in the stability and shape of the erythrocyte membrane. This is Glycophorin-B from Homo sapiens (Human).